Reading from the N-terminus, the 47-residue chain is MASFTLDLLAQLPEAYQAFSPLIDILPLIPVFFLLLAFVWQASVGFR.

Residues 1–10 constitute a propeptide that is removed on maturation; it reads MASFTLDLLA. Residues 19 to 39 traverse the membrane as a helical segment; it reads FSPLIDILPLIPVFFLLLAFV.

The protein belongs to the PsbK family. PSII is composed of 1 copy each of membrane proteins PsbA, PsbB, PsbC, PsbD, PsbE, PsbF, PsbH, PsbI, PsbJ, PsbK, PsbL, PsbM, PsbT, PsbX, PsbY, PsbZ, Psb30/Ycf12, peripheral proteins PsbO, CyanoQ (PsbQ), PsbU, PsbV and a large number of cofactors. It forms dimeric complexes.

It localises to the cellular thylakoid membrane. One of the components of the core complex of photosystem II (PSII). PSII is a light-driven water:plastoquinone oxidoreductase that uses light energy to abstract electrons from H(2)O, generating O(2) and a proton gradient subsequently used for ATP formation. It consists of a core antenna complex that captures photons, and an electron transfer chain that converts photonic excitation into a charge separation. The polypeptide is Photosystem II reaction center protein K (Parasynechococcus marenigrum (strain WH8102)).